Here is a 327-residue protein sequence, read N- to C-terminus: DNA-directed RNA polymerase subunit alpha (327 aa).

Residues 1–233 (MQNSASEFLK…DQLSIFADLQ (233 aa)) form an alpha N-terminal domain (alpha-NTD) region. The alpha C-terminal domain (alpha-CTD) stretch occupies residues 247–327 (VDPILLRPVD…NWPPAGLEKP (81 aa)).

The protein belongs to the RNA polymerase alpha chain family. In terms of assembly, homodimer. The RNAP catalytic core consists of 2 alpha, 1 beta, 1 beta' and 1 omega subunit. When a sigma factor is associated with the core the holoenzyme is formed, which can initiate transcription.

It carries out the reaction RNA(n) + a ribonucleoside 5'-triphosphate = RNA(n+1) + diphosphate. Its function is as follows. DNA-dependent RNA polymerase catalyzes the transcription of DNA into RNA using the four ribonucleoside triphosphates as substrates. The chain is DNA-directed RNA polymerase subunit alpha from Laribacter hongkongensis (strain HLHK9).